The following is a 290-amino-acid chain: Lipoyl synthase (290 aa).

C34, C39, C45, C60, C64, C67, and S273 together coordinate [4Fe-4S] cluster. The Radical SAM core domain occupies 46 to 262; the sequence is WNKRHATVMI…KYIAYSKGFL (217 aa).

This sequence belongs to the radical SAM superfamily. Lipoyl synthase family. Requires [4Fe-4S] cluster as cofactor.

It localises to the cytoplasm. The enzyme catalyses [[Fe-S] cluster scaffold protein carrying a second [4Fe-4S](2+) cluster] + N(6)-octanoyl-L-lysyl-[protein] + 2 oxidized [2Fe-2S]-[ferredoxin] + 2 S-adenosyl-L-methionine + 4 H(+) = [[Fe-S] cluster scaffold protein] + N(6)-[(R)-dihydrolipoyl]-L-lysyl-[protein] + 4 Fe(3+) + 2 hydrogen sulfide + 2 5'-deoxyadenosine + 2 L-methionine + 2 reduced [2Fe-2S]-[ferredoxin]. The protein operates within protein modification; protein lipoylation via endogenous pathway; protein N(6)-(lipoyl)lysine from octanoyl-[acyl-carrier-protein]: step 2/2. In terms of biological role, catalyzes the radical-mediated insertion of two sulfur atoms into the C-6 and C-8 positions of the octanoyl moiety bound to the lipoyl domains of lipoate-dependent enzymes, thereby converting the octanoylated domains into lipoylated derivatives. The polypeptide is Lipoyl synthase (Wolbachia pipientis subsp. Culex pipiens (strain wPip)).